The sequence spans 180 residues: Large ribosomal subunit protein uL5 (180 aa).

The protein belongs to the universal ribosomal protein uL5 family. In terms of assembly, part of the 50S ribosomal subunit; part of the 5S rRNA/L5/L18/L25 subcomplex. Contacts the 5S rRNA and the P site tRNA. Forms a bridge to the 30S subunit in the 70S ribosome.

Its function is as follows. This is one of the proteins that bind and probably mediate the attachment of the 5S RNA into the large ribosomal subunit, where it forms part of the central protuberance. In the 70S ribosome it contacts protein S13 of the 30S subunit (bridge B1b), connecting the 2 subunits; this bridge is implicated in subunit movement. Contacts the P site tRNA; the 5S rRNA and some of its associated proteins might help stabilize positioning of ribosome-bound tRNAs. This is Large ribosomal subunit protein uL5 from Clostridium acetobutylicum (strain ATCC 824 / DSM 792 / JCM 1419 / IAM 19013 / LMG 5710 / NBRC 13948 / NRRL B-527 / VKM B-1787 / 2291 / W).